Here is a 311-residue protein sequence, read N- to C-terminus: tRNA dimethylallyltransferase (311 aa).

9–16 is a binding site for ATP; it reads GPTAVGKT. Position 11–16 (11–16) interacts with substrate; it reads TAVGKT. Residues 34-37 are interaction with substrate tRNA; sequence DSMQ.

The protein belongs to the IPP transferase family. As to quaternary structure, monomer. Mg(2+) is required as a cofactor.

The catalysed reaction is adenosine(37) in tRNA + dimethylallyl diphosphate = N(6)-dimethylallyladenosine(37) in tRNA + diphosphate. Catalyzes the transfer of a dimethylallyl group onto the adenine at position 37 in tRNAs that read codons beginning with uridine, leading to the formation of N6-(dimethylallyl)adenosine (i(6)A). The polypeptide is tRNA dimethylallyltransferase (Clostridium botulinum (strain Loch Maree / Type A3)).